We begin with the raw amino-acid sequence, 211 residues long: N-(5'-phosphoribosyl)anthranilate isomerase (211 aa).

Belongs to the TrpF family.

It catalyses the reaction N-(5-phospho-beta-D-ribosyl)anthranilate = 1-(2-carboxyphenylamino)-1-deoxy-D-ribulose 5-phosphate. Its pathway is amino-acid biosynthesis; L-tryptophan biosynthesis; L-tryptophan from chorismate: step 3/5. This is N-(5'-phosphoribosyl)anthranilate isomerase from Methanococcus maripaludis (strain DSM 14266 / JCM 13030 / NBRC 101832 / S2 / LL).